Reading from the N-terminus, the 262-residue chain is 1-(5-phosphoribosyl)-5-[(5-phosphoribosylamino)methylideneamino] imidazole-4-carboxamide isomerase (262 aa).

The Proton acceptor role is filled by Asp-8. Catalysis depends on Asp-130, which acts as the Proton donor.

This sequence belongs to the HisA/HisF family.

Its subcellular location is the cytoplasm. The enzyme catalyses 1-(5-phospho-beta-D-ribosyl)-5-[(5-phospho-beta-D-ribosylamino)methylideneamino]imidazole-4-carboxamide = 5-[(5-phospho-1-deoxy-D-ribulos-1-ylimino)methylamino]-1-(5-phospho-beta-D-ribosyl)imidazole-4-carboxamide. Its pathway is amino-acid biosynthesis; L-histidine biosynthesis; L-histidine from 5-phospho-alpha-D-ribose 1-diphosphate: step 4/9. The protein is 1-(5-phosphoribosyl)-5-[(5-phosphoribosylamino)methylideneamino] imidazole-4-carboxamide isomerase of Chloroherpeton thalassium (strain ATCC 35110 / GB-78).